A 120-amino-acid polypeptide reads, in one-letter code: Ribonuclease P protein component (120 aa).

It belongs to the RnpA family. As to quaternary structure, consists of a catalytic RNA component (M1 or rnpB) and a protein subunit.

The catalysed reaction is Endonucleolytic cleavage of RNA, removing 5'-extranucleotides from tRNA precursor.. Functionally, RNaseP catalyzes the removal of the 5'-leader sequence from pre-tRNA to produce the mature 5'-terminus. It can also cleave other RNA substrates such as 4.5S RNA. The protein component plays an auxiliary but essential role in vivo by binding to the 5'-leader sequence and broadening the substrate specificity of the ribozyme. The protein is Ribonuclease P protein component of Pseudoalteromonas atlantica (strain T6c / ATCC BAA-1087).